Here is a 729-residue protein sequence, read N- to C-terminus: Golgin subfamily A member 5 (729 aa).

Residue Ser-2 is modified to N-acetylserine. Topologically, residues 2 to 696 (SWFADLAGRA…IFLRRYPIAR (695 aa)) are cytoplasmic. Dimethylated arginine occurs at positions 27 and 89. 2 disordered regions span residues 89 to 222 (RTVG…SQEL) and 626 to 645 (SASS…VDSG). Ser-116 carries the phosphoserine modification. Residues 134 to 146 (PTGRVEVKKEKGR) are compositionally biased toward basic and acidic residues. Positions 148–167 (PVSPSSPSGVSSVNTSVTTT) are enriched in low complexity. 2 stretches are compositionally biased toward polar residues: residues 175–186 (GSQSPGVNSSDS) and 626–638 (SASS…SAIN). A coiled-coil region spans residues 215 to 629 (GSSRSQELSN…LEQQVHSASS (415 aa)). A helical; Anchor for type IV membrane protein membrane pass occupies residues 697-717 (VFVIIYMALLHLWVMIVLLTY). Topologically, residues 718-729 (SPEMHHDQPYGK) are lumenal.

In terms of assembly, homodimer. Interacts with RAB1A that has been activated by GTP-binding. Interacts with isoform CASP of CUX1. Post-translationally, highly phosphorylated during mitosis. Phosphorylation is barely detectable during interphase.

The protein resides in the golgi apparatus membrane. Its function is as follows. Involved in maintaining Golgi structure. Stimulates the formation of Golgi stacks and ribbons. Involved in intra-Golgi retrograde transport. The chain is Golgin subfamily A member 5 (Golga5) from Mus musculus (Mouse).